Consider the following 557-residue polypeptide: Glutamyl-tRNA(Gln) amidotransferase subunit B, mitochondrial (557 aa).

Residues Met1–Gly41 constitute a mitochondrion transit peptide. A disordered region spans residues His26–Val45. The span at Thr32 to Val45 shows a compositional bias: polar residues. Position 529 is an N6-succinyllysine (Lys529).

This sequence belongs to the GatB/GatE family. GatB subfamily. Subunit of the heterotrimeric GatCAB amidotransferase (AdT) complex, composed of A (QRSL1), B (GATB) and C (GATC) subunits. In terms of tissue distribution, predominantly expressed in tissues characterized by high rates of oxidative phosphorylation (OxPhos), including muscle and heart.

Its subcellular location is the mitochondrion. It catalyses the reaction L-glutamyl-tRNA(Gln) + L-glutamine + ATP + H2O = L-glutaminyl-tRNA(Gln) + L-glutamate + ADP + phosphate + H(+). Functionally, allows the formation of correctly charged Gln-tRNA(Gln) through the transamidation of misacylated Glu-tRNA(Gln) in the mitochondria. The reaction takes place in the presence of glutamine and ATP through an activated gamma-phospho-Glu-tRNA(Gln). In Homo sapiens (Human), this protein is Glutamyl-tRNA(Gln) amidotransferase subunit B, mitochondrial.